The sequence spans 278 residues: Malonyl-[acyl-carrier protein] O-methyltransferase (278 aa).

This sequence belongs to the methyltransferase superfamily.

It carries out the reaction malonyl-[ACP] + S-adenosyl-L-methionine = malonyl-[ACP] methyl ester + S-adenosyl-L-homocysteine. It functions in the pathway cofactor biosynthesis; biotin biosynthesis. Functionally, converts the free carboxyl group of a malonyl-thioester to its methyl ester by transfer of a methyl group from S-adenosyl-L-methionine (SAM). It allows to synthesize pimeloyl-ACP via the fatty acid synthetic pathway. The protein is Malonyl-[acyl-carrier protein] O-methyltransferase of Brevibacillus brevis (strain 47 / JCM 6285 / NBRC 100599).